The chain runs to 308 residues: Olfactory receptor 2D2 (308 aa).

Residues 1–25 (MRQINQTQVTEFLLLGLSDGPHTEQ) lie on the Extracellular side of the membrane. Asn-5 is a glycosylation site (N-linked (GlcNAc...) asparagine). A helical membrane pass occupies residues 26-49 (LLFIVLLGVYLVTVLGNLLLISLV). Residues 50-57 (HVDSQLHT) lie on the Cytoplasmic side of the membrane. A helical membrane pass occupies residues 58–79 (PMYFFLCNLSLADLCFSTNIVP). The Extracellular portion of the chain corresponds to 80-100 (QALVHLLSRKKVIAFTLCAAR). Residues 101 to 120 (LLFFLIFGCTQCALLAVMSY) traverse the membrane as a helical segment. Residues 121–139 (DRYVAICNPLRYPNIMTWK) are Cytoplasmic-facing. The helical transmembrane segment at 140 to 158 (VCVQLATGSWTSGILVSVV) threads the bilayer. The Extracellular segment spans residues 159 to 195 (DTTFILRLPYRGSNSIAHFFCEAPALLILASTDTHAS). The chain crosses the membrane as a helical span at residues 196 to 219 (EMAIFLMGVVILLIPVFLILVSYG). Residues 220–236 (RIIVTVVKMKSTVGSLK) lie on the Cytoplasmic side of the membrane. The chain crosses the membrane as a helical span at residues 237-259 (AFSTCGSHLMVVILFYGSAIITY). The Extracellular portion of the chain corresponds to 260 to 270 (MTPKSSKQQEK). Residues 271–290 (SVSVFYAIVTPMLNPLIYSL) traverse the membrane as a helical segment. At 291–308 (RNKDVKAALRKVATRNFP) the chain is on the cytoplasmic side.

It belongs to the G-protein coupled receptor 1 family.

The protein resides in the cell membrane. Functionally, odorant receptor. This chain is Olfactory receptor 2D2 (OR2D2), found in Homo sapiens (Human).